The primary structure comprises 257 residues: 1-(5-phosphoribosyl)-5-[(5-phosphoribosylamino)methylideneamino] imidazole-4-carboxamide isomerase (257 aa).

Asp-8 (proton acceptor) is an active-site residue. Asp-129 serves as the catalytic Proton donor.

Belongs to the HisA/HisF family.

It is found in the cytoplasm. The catalysed reaction is 1-(5-phospho-beta-D-ribosyl)-5-[(5-phospho-beta-D-ribosylamino)methylideneamino]imidazole-4-carboxamide = 5-[(5-phospho-1-deoxy-D-ribulos-1-ylimino)methylamino]-1-(5-phospho-beta-D-ribosyl)imidazole-4-carboxamide. Its pathway is amino-acid biosynthesis; L-histidine biosynthesis; L-histidine from 5-phospho-alpha-D-ribose 1-diphosphate: step 4/9. The polypeptide is 1-(5-phosphoribosyl)-5-[(5-phosphoribosylamino)methylideneamino] imidazole-4-carboxamide isomerase (Gloeothece citriformis (strain PCC 7424) (Cyanothece sp. (strain PCC 7424))).